The following is a 776-amino-acid chain: Cullin-1 (776 aa).

Arginine 63 is modified (omega-N-methylarginine). A Cullin neddylation domain is found at 706–766 (DRKLLIQAAI…IEKEYLERVD (61 aa)). Lysine 720 is covalently cross-linked (Glycyl lysine isopeptide (Lys-Gly) (interchain with G-Cter in NEDD8)).

This sequence belongs to the cullin family. As to quaternary structure, component of multiple Cul1-RING E3 ubiquitin-protein ligase complexes commonly known as SCF (SKP1-CUL1-F-box) complexes, consisting of CUL1, SKP1, RBX1 and a variable F-box domain-containing protein as substrate-specific subunit. Component of the SCF(FBXW11) complex containing FBXW11. Component of the SCF(SKP2) complex containing SKP2, in which it interacts directly with SKP1, SKP2 and RBX1. Component of the SCF(FBXW2) complex containing FBXW2. Component of the SCF(FBXO32) complex containing FBXO32. Component of the probable SCF(FBXO7) complex containing FBXO7. Component of the SCF(FBXO10) complex containing FBXO10. Component of the SCF(FBXO11) complex containing FBXO11. Component of the SCF(FBXO25) complex containing FBXO25. Component of the SCF(FBXO33) complex containing FBXO33. Component of the probable SCF(FBXO4) complex containing FBXO4. Component of the SCF(FBXO44) complex, composed of SKP1, CUL1 and FBXO44. Component of the SCF(BTRC) complex, composed of SKP1, CUL1 and BTRC. This complex binds phosphorylated NFKBIA. Part of a SCF complex consisting of CUL1, RBX1, SKP1 and FBXO2. Component of a SCF(SKP2)-like complex containing CUL1, SKP1, TRIM21 and SKP2. Component of the SCF(FBXO17) complex, composed of SKP1, CUL1 and FBXO17. Component of the SCF(FBXO27) complex, composed of SKP1, CUL1 and FBXO27. Component of the SCF(CCNF) complex consisting of CUL1, RBX1, SKP1 and CCNF. Interacts with CCNF. Component of the SCF(FBXL3) complex composed of CUL1, SKP1, RBX1 and FBXL3. Component of the SCF(FBXL21) complex composed of CUL1, SKP1, RBX1 and FBXL21. Component of the SCF(FBXO9) composed of CUL1, SKP1, RBX1 and FBXO9. Component of the SCF(FBXW7) composed of CUL1, SKP1, RBX1 and FBXW7. Component of the SCF(FBXO31) complex composed of CUL1, SKP1, RBX1 and FBXO31. Interacts with CHEK2; mediates CHEK2 ubiquitination and regulates its function. Part of a complex with TIP120A/CAND1 and RBX1. The unneddylated form interacts with TIP120A/CAND1 and the interaction mediates the exchange of the F-box substrate-specific subunit. Can self-associate. Interacts with FBXW8. Interacts with RNF7. Interacts with TRIM21. Interacts with COPS2. Interacts with UBE2M. Identified in a complex with RBX1 and GLMN. Interacts with CEP68 as part of the SCF(FBXW11) complex; the interaction is probably mediated by FBXW11 and the complex also contains CDK5RAP2 and PCNT. Interacts (when neddylated) with ARIH1; leading to activate the E3 ligase activity of ARIH1. Interacts with COPS9 isoform 2. Interacts with UBXN1. Interacts with KAT7, probably as part of an SCF complex; the interaction mediates KAT7 ubiquitination. Interacts with NOTCH2. Part of a complex that contains DCUN1D5, CUL1 and RBX1; this complex is bridged by CUL1. Interacts (unneddylated form) with DCUN1D1, DCUN1D2, DCUN1D3, DCUN1D4 and DCUN1D5; these interactions promote the cullin neddylation. Interacts (via the C-terminal domain) with CUL7; the interaction seems to be mediated by FBXW8; it is likely specific to FBXW8, but not other F-box proteins. Interacts with UBR2, as part of SCF(BTRC) complex; the interaction mediates 'Lys-48'-linked ubiquitination of UBR2 and is regulated by DUSP22 in the T-cell receptor signaling pathway. In terms of assembly, (Microbial infection) Interacts with Epstein-Barr virus BPLF1. (Microbial infection) Interacts with Human adenovirus early E1A protein; this interaction inhibits RBX1-CUL1-dependent elongation reaction of ubiquitin chains by the SCF(FBXW7) complex. As to quaternary structure, (Microbial infection) Interacts with vaccinia virus protein C9L. In terms of assembly, (Microbial infection) Interacts with Epstein-Barr virus (EBV) tegument protein BGLF2; this interaction might facilitate CUL1 recruitment to STAT2, leading to ubiquitination and degradation of the latter. Neddylated; which enhances the ubiquitination activity of SCF. Neddylation prevents binding of the inhibitor CAND1. Neddylation leads to structural rearrangment in the complex that allows interaction between the E2 ubiquitin-conjugating enzyme and the acceptor ubiquitin. Deneddylated via its interaction with the COP9 signalosome (CSN) complex. Post-translationally, (Microbial infection) Deneddylated by Epstein-Barr virus BPLF1 leading to a S-phase-like environment that is required for efficient replication of the viral genome. Expressed in lung fibroblasts.

Its pathway is protein modification; protein ubiquitination. Core component of multiple cullin-RING-based SCF (SKP1-CUL1-F-box protein) E3 ubiquitin-protein ligase complexes, which mediate the ubiquitination of proteins involved in cell cycle progression, signal transduction and transcription. SCF complexes and ARIH1 collaborate in tandem to mediate ubiquitination of target proteins. In the SCF complex, serves as a rigid scaffold that organizes the SKP1-F-box protein and RBX1 subunits. May contribute to catalysis through positioning of the substrate and the ubiquitin-conjugating enzyme. The E3 ubiquitin-protein ligase activity of the complex is dependent on the neddylation of the cullin subunit and exchange of the substrate recognition component is mediated by TIP120A/CAND1. The functional specificity of the SCF complex depends on the F-box protein as substrate recognition component. SCF(BTRC) and SCF(FBXW11) direct ubiquitination of CTNNB1 and participate in Wnt signaling. SCF(FBXW11) directs ubiquitination of phosphorylated NFKBIA. SCF(BTRC) directs ubiquitination of NFKBIB, NFKBIE, ATF4, SMAD3, SMAD4, CDC25A, FBXO5 and probably NFKB2. SCF(BTRC) and/or SCF(FBXW11) direct ubiquitination of CEP68. SCF(SKP2) directs ubiquitination of phosphorylated CDKN1B/p27kip and is involved in regulation of G1/S transition. SCF(SKP2) directs ubiquitination of ORC1, CDT1, RBL2, ELF4, CDKN1A, RAG2, FOXO1A, and probably MYC and TAL1. SCF(FBXW7) directs ubiquitination of CCNE1, NOTCH1 released notch intracellular domain (NICD), and probably PSEN1. SCF(FBXW2) directs ubiquitination of GCM1. SCF(FBXO32) directs ubiquitination of MYOD1. SCF(FBXO7) directs ubiquitination of BIRC2 and DLGAP5. SCF(FBXO33) directs ubiquitination of YBX1. SCF(FBXO1) directs ubiquitination of BCL6 and DTL but does not seem to direct ubiquitination of TP53. SCF(BTRC) mediates the ubiquitination of NFKBIA at 'Lys-21' and 'Lys-22'; the degradation frees the associated NFKB1-RELA dimer to translocate into the nucleus and to activate transcription. SCF(CCNF) directs ubiquitination of CCP110. SCF(FBXL3) and SCF(FBXL21) direct ubiquitination of CRY1 and CRY2. SCF(FBXO9) directs ubiquitination of TTI1 and TELO2. SCF(FBXO10) directs ubiquitination of BCL2. Neddylated CUL1-RBX1 ubiquitinates p53/TP53 recruited by Cul7-RING(FBXW8) complex. SCF(BTRC) directs 'Lys-48'-linked ubiquitination of UBR2 in the T-cell receptor signaling pathway. The SCF(FBXO31) protein ligase complex specifically mediates the ubiquitination of proteins amidated at their C-terminus in response to oxidative stress. The chain is Cullin-1 (CUL1) from Homo sapiens (Human).